Consider the following 228-residue polypeptide: MKCKILVADLDGTLTLSRNTYELSVEALLALRKARDSGLRVVLATANGLDFALTIARYLGVRDVIAENGCLIHLDGVTYELCSGDMSIVDKVIISTGAVIPSPQNRCRKYDMAYIPLVKDTLEKVRAVVGTGYIVESSGYAIHVRPAGVDKGVAVSWLCRKLDVSCHQVATVGDSDVDVGMLSIAWGIAVGNATEAAKKAARVVVEEPSGLGFKEAVNLILSGDACTP.

The active-site Nucleophile is the Asp-9. Mg(2+) is bound by residues Asp-9 and Asp-11. Lys-151 provides a ligand contact to substrate. Asp-174 and Asp-178 together coordinate Mg(2+).

This sequence belongs to the archaeal SPP-like hydrolase family. Mg(2+) is required as a cofactor.

It catalyses the reaction 2-phosphoglycolate + H2O = glycolate + phosphate. Functionally, catalyzes the dephosphorylation of 2-phosphoglycolate. This chain is Phosphoglycolate phosphatase, found in Pyrobaculum islandicum (strain DSM 4184 / JCM 9189 / GEO3).